We begin with the raw amino-acid sequence, 163 residues long: Probable RNA-binding protein EIF1AD (163 aa).

An S1-like domain is found at 18-96 (MMEDDYELPT…VKAEISKILT (79 aa)). The segment at 106–163 (AGIWPERFAKNPPQEAKAQNDDEDSDFEDDLTPNTNRPVQESDEEDEDTDTESSDEED) is disordered. Composition is skewed to acidic residues over residues 126 to 136 (DDEDSDFEDDL) and 146 to 163 (ESDEEDEDTDTESSDEED).

This sequence belongs to the EIF1AD family.

In Drosophila pseudoobscura pseudoobscura (Fruit fly), this protein is Probable RNA-binding protein EIF1AD.